A 275-amino-acid polypeptide reads, in one-letter code: 2,3,4,5-tetrahydropyridine-2,6-dicarboxylate N-succinyltransferase (275 aa).

Arg-104 and Asp-141 together coordinate substrate.

The protein belongs to the transferase hexapeptide repeat family. Homotrimer.

It localises to the cytoplasm. It carries out the reaction (S)-2,3,4,5-tetrahydrodipicolinate + succinyl-CoA + H2O = (S)-2-succinylamino-6-oxoheptanedioate + CoA. It participates in amino-acid biosynthesis; L-lysine biosynthesis via DAP pathway; LL-2,6-diaminopimelate from (S)-tetrahydrodipicolinate (succinylase route): step 1/3. This is 2,3,4,5-tetrahydropyridine-2,6-dicarboxylate N-succinyltransferase from Actinobacillus succinogenes (strain ATCC 55618 / DSM 22257 / CCUG 43843 / 130Z).